A 162-amino-acid polypeptide reads, in one-letter code: Regulatory protein RecX (162 aa).

Belongs to the RecX family.

It is found in the cytoplasm. Its function is as follows. Modulates RecA activity. This is Regulatory protein RecX from Pectobacterium atrosepticum (strain SCRI 1043 / ATCC BAA-672) (Erwinia carotovora subsp. atroseptica).